We begin with the raw amino-acid sequence, 196 residues long: Peptidyl-tRNA hydrolase (196 aa).

Tyrosine 18 contributes to the tRNA binding site. Histidine 23 functions as the Proton acceptor in the catalytic mechanism. Residues phenylalanine 69, asparagine 71, and asparagine 117 each coordinate tRNA.

Belongs to the PTH family. In terms of assembly, monomer.

Its subcellular location is the cytoplasm. The catalysed reaction is an N-acyl-L-alpha-aminoacyl-tRNA + H2O = an N-acyl-L-amino acid + a tRNA + H(+). Its function is as follows. Hydrolyzes ribosome-free peptidyl-tRNAs (with 1 or more amino acids incorporated), which drop off the ribosome during protein synthesis, or as a result of ribosome stalling. Functionally, catalyzes the release of premature peptidyl moieties from peptidyl-tRNA molecules trapped in stalled 50S ribosomal subunits, and thus maintains levels of free tRNAs and 50S ribosomes. The chain is Peptidyl-tRNA hydrolase from Aliivibrio fischeri (strain MJ11) (Vibrio fischeri).